The following is a 324-amino-acid chain: DnaJ homolog subfamily B member 2 (324 aa).

An N-acetylalanine modification is found at Ala2. Positions 3–69 (SYYEILDVPR…HKREIYDRYG (67 aa)) constitute a J domain. Disordered stretches follow at residues 70 to 91 (REGL…AGPG) and 218 to 324 (LSRR…CHIL). 2 UIM domains span residues 207-226 (GVPD…QQPS) and 250-269 (SEDE…MEAA). Position 311 is a phosphoserine (Ser311). Residues 314 to 324 (SEEKASRCHIL) show a composition bias toward basic and acidic residues. Residue Cys321 is modified to Cysteine methyl ester. Cys321 carries S-geranylgeranyl cysteine lipidation. A CAAX motif motif is present at residues 321–324 (CHIL). The propeptide at 322 to 324 (HIL) is removed in mature form.

Interacts with HSP70 (HSPA1A or HSPA1B). Interacts with HSPA8/Hsc70. Interacts with PSMA3 and most probably with the whole proteasomal complex. In terms of processing, ubiquitinated by STUB1; does not lead to proteasomal degradation.

It localises to the cytoplasm. The protein resides in the nucleus. It is found in the endoplasmic reticulum membrane. In terms of biological role, functions as a co-chaperone, regulating the substrate binding and activating the ATPase activity of chaperones of the HSP70/heat shock protein 70 family. In parallel, also contributes to the ubiquitin-dependent proteasomal degradation of misfolded proteins. Thereby, may regulate the aggregation and promote the functional recovery of misfolded proteins like HTT, MC4R, PRKN, RHO and SOD1 and be crucial for many biological processes. Isoform 1 which is localized to the endoplasmic reticulum membranes may specifically function in ER-associated protein degradation of misfolded proteins. In Mus musculus (Mouse), this protein is DnaJ homolog subfamily B member 2.